The following is a 242-amino-acid chain: Host range factor p28 (242 aa).

The KilA-N domain maps to 21-131; that stretch reads YIDEPNDIRL…QSILRGLVNW (111 aa). Residues 173–226 form an RING-type zinc finger; that stretch reads CGICYEVVYSKRLENDRYFGLLDSCNHIFCITCINIWHRTRRETGASDNCPICR.

The protein belongs to the orthopoxvirus OPG021 family.

Its subcellular location is the host cytoplasm. The catalysed reaction is S-ubiquitinyl-[E2 ubiquitin-conjugating enzyme]-L-cysteine + [acceptor protein]-L-lysine = [E2 ubiquitin-conjugating enzyme]-L-cysteine + N(6)-ubiquitinyl-[acceptor protein]-L-lysine.. In terms of biological role, RING-finger E3 ubiquitin ligase which catalyzes the formation of both 'Lys-48'- and 'Lys-63'-linked polyubiquitin chains. Plays an important role in virulence by acting as an anti-apoptotic factor. This Monkeypox virus protein is Host range factor p28 (OPG021).